The following is a 255-amino-acid chain: Putative esterase YitV (255 aa).

This Bacillus subtilis (strain 168) protein is Putative esterase YitV (yitV).